The primary structure comprises 294 residues: Acetylglutamate kinase (294 aa).

Substrate-binding positions include 67–68, Arg89, and Asn191; that span reads GG.

Belongs to the acetylglutamate kinase family. ArgB subfamily.

Its subcellular location is the cytoplasm. The enzyme catalyses N-acetyl-L-glutamate + ATP = N-acetyl-L-glutamyl 5-phosphate + ADP. It functions in the pathway amino-acid biosynthesis; L-arginine biosynthesis; N(2)-acetyl-L-ornithine from L-glutamate: step 2/4. Catalyzes the ATP-dependent phosphorylation of N-acetyl-L-glutamate. The sequence is that of Acetylglutamate kinase from Methylobacillus flagellatus (strain ATCC 51484 / DSM 6875 / VKM B-1610 / KT).